A 423-amino-acid chain; its full sequence is MLPPQKKPWESMAKGLVLGALFTSFLLLVYSYAVPPLHAGLASTTPEAAASCSPPALEPEAVIRANGSAGECQPRRNIVFLKTHKTASSTLLNILFRFGQKHRLKFAFPNGRNDFDYPTFFARSLVQDYRPGACFNIICNHMRFHYDEVRGLVPTNAIFITVLRDPARLFESSFHYFGPVVPLTWKLSAGDKLTEFLQDPDRYYDPNGFNAHYLRNLLFFDLGYDNSLDPSSPQVQEHILEVERRFHLVLLQEYFDESLVLLKDLLCWELEDVLYFKLNARRDSPVPRLSGELYGRATAWNMLDSHLYRHFNASFWRKVEAFGRERMAREVAALRHANERMRTICIDGGHAVDAAAIQDEAMQPWQPLGTKSILGYNLKKSIGQRHAQLCRRMLTPEIQYLMDLGANLWVTKLWKFIRDFLRW.

The Cytoplasmic portion of the chain corresponds to 1-14 (MLPPQKKPWESMAK). The helical; Signal-anchor for type II membrane protein transmembrane segment at 15-35 (GLVLGALFTSFLLLVYSYAVP) threads the bilayer. Residues 36–423 (PLHAGLASTT…WKFIRDFLRW (388 aa)) lie on the Lumenal side of the membrane. Asn66 and Asn312 each carry an N-linked (GlcNAc...) asparagine glycan.

The protein belongs to the galactose-3-O-sulfotransferase family. In terms of tissue distribution, expressed in kidney proximal tubule, gastric mucosa and adenocarcinoma. Highly expressed in renal cell carcinoma cell lines.

The protein localises to the golgi apparatus membrane. It carries out the reaction a beta-D-galactosyl-(1&lt;-&gt;1')-N-acylsphing-4-enine + 3'-phosphoadenylyl sulfate = an N-acyl-1-beta-D-(3-O-sulfo)-galactosyl-sphing-4-enine + adenosine 3',5'-bisphosphate + H(+). The enzyme catalyses a 1-O-alkyl-2-acyl-3-O-(beta-D-galactosyl)-sn-glycerol + 3'-phosphoadenylyl sulfate = a 1-O-alkyl-2-acyl-3-(beta-D-3-sulfogalactosyl)-sn-glycerol + adenosine 3',5'-bisphosphate + H(+). The catalysed reaction is a beta-D-Gal-(1&lt;-&gt;1')-ceramide + 3'-phosphoadenylyl sulfate = 1-(3-O-sulfo-beta-D-galactosyl)-ceramide + adenosine 3',5'-bisphosphate + H(+). It catalyses the reaction a 1,2-diacyl-3-O-(beta-D-galactosyl)-sn-glycerol + 3'-phosphoadenylyl sulfate = 1,2-diacyl-3-(3-O-sulfo-beta-D-galactosyl)-sn-glycerol + adenosine 3',5'-bisphosphate + H(+). It carries out the reaction a beta-D-Gal-(1-&gt;4)-beta-D-Glc-(1&lt;-&gt;1)-Cer(d18:1(4E)) + 3'-phosphoadenylyl sulfate = beta-D-3-sulfogalactosyl-(1-&gt;4)-beta-D-glucosyl-(1&lt;-&gt;1')-N-acylsphing-4-enine + adenosine 3',5'-bisphosphate + H(+). Its pathway is lipid metabolism; sphingolipid metabolism. Its function is as follows. Catalyzes the transfer of a sulfate group to position 3 of non-reducing beta-galactosyl residues in glycerolipids and sphingolipids, therefore participates in the biosynthesis of sulfoglycolipids. Catalyzes the synthesis of galactosylceramide sulfate (sulfatide), a major lipid component of the myelin sheath and of monogalactosylalkylacylglycerol sulfate (seminolipid), present in spermatocytes. Seems to prefer beta-glycosides at the non-reducing termini of sugar chains attached to a lipid moiety. Also acts on lactosylceramide, galactosyl 1-alkyl-2-sn-glycerol and galactosyl diacylglycerol (in vitro). In Homo sapiens (Human), this protein is Galactosylceramide sulfotransferase.